Reading from the N-terminus, the 908-residue chain is Protein translocase subunit SecA (908 aa).

Residues Q87, 105–109 (GEGKT), and D511 each bind ATP. Positions 559–570 (ERHESRRIDNQL) are enriched in basic and acidic residues. 2 disordered regions span residues 559–582 (ERHE…DPGS) and 841–908 (RRRR…GRLE). The segment covering 847–856 (LAQQMQRAQA) has biased composition (low complexity). Over residues 862 to 873 (TEEDSDAEEQAE) the composition is skewed to acidic residues. Residues C892, C894, C903, and H904 each coordinate Zn(2+). A compositionally biased stretch (basic residues) spans 898 to 908 (KKYKQCHGRLE).

It belongs to the SecA family. As to quaternary structure, monomer and homodimer. Part of the essential Sec protein translocation apparatus which comprises SecA, SecYEG and auxiliary proteins SecDF-YajC and YidC. It depends on Zn(2+) as a cofactor.

It localises to the cell inner membrane. It is found in the cytoplasm. It carries out the reaction ATP + H2O + cellular proteinSide 1 = ADP + phosphate + cellular proteinSide 2.. In terms of biological role, part of the Sec protein translocase complex. Interacts with the SecYEG preprotein conducting channel. Has a central role in coupling the hydrolysis of ATP to the transfer of proteins into and across the cell membrane, serving both as a receptor for the preprotein-SecB complex and as an ATP-driven molecular motor driving the stepwise translocation of polypeptide chains across the membrane. This chain is Protein translocase subunit SecA, found in Hahella chejuensis (strain KCTC 2396).